Consider the following 95-residue polypeptide: Signal recognition particle 19 kDa protein (95 aa).

It belongs to the SRP19 family. In terms of assembly, part of the signal recognition particle protein translocation system, which is composed of SRP and FtsY. Archaeal SRP consists of a 7S RNA molecule of 300 nucleotides and two protein subunits: SRP54 and SRP19.

The protein resides in the cytoplasm. Involved in targeting and insertion of nascent membrane proteins into the cytoplasmic membrane. Binds directly to 7S RNA and mediates binding of the 54 kDa subunit of the SRP. This chain is Signal recognition particle 19 kDa protein, found in Methanococcoides burtonii (strain DSM 6242 / NBRC 107633 / OCM 468 / ACE-M).